We begin with the raw amino-acid sequence, 433 residues long: MKVLVIGSGGREHAIVEALARSEYHPKIYAVMGNANPGIRRRAEDYLLEKETNVPAIVQYAQDCNVDMAIIGPESPLAAGLADELELNGIPVVGPRKDAARIEFDKAWTREFMARNNIKGLPKFKVYDDYDDACRYLEDNPDVVVKPAGLTGGKGVKVMGEHMHTLEEAREYVKSVLEHDRVVIEERLKGEEVTIMAFVDGKHVAPMPTVQDHKRAYEDDQGPNTGGMGSYTDNIDLLPFMTLDDYNEGVAIMEQTVKAMEKDVGVPYKGVLYGQFMITRDGMKVVEFNARFGDPEAMNVLSLLKTDFVDICEAIVDGSLDKLKIEFERSATVCKYVVPAGYPDNPVKDAPLTVVEKPEYLVYYASVNERDGKVYTTSSRSLAIVGVADTIADAEILSEEGLSNVQGEFHCRHDIGKERLIRKRIEHMDAIRG.

In terms of domain architecture, ATP-grasp spans 111–317 (EFMARNNIKG…FVDICEAIVD (207 aa)). 138–194 (EDNPDVVVKPAGLTGGKGVKVMGEHMHTLEEAREYVKSVLEHDRVVIEERLKGEEVT) is an ATP binding site. The Mg(2+) site is built by glutamine 275, glutamate 287, and asparagine 289. Mn(2+)-binding residues include glutamine 275, glutamate 287, and asparagine 289.

The protein belongs to the GARS family. Requires Mg(2+) as cofactor. It depends on Mn(2+) as a cofactor.

It catalyses the reaction 5-phospho-beta-D-ribosylamine + glycine + ATP = N(1)-(5-phospho-beta-D-ribosyl)glycinamide + ADP + phosphate + H(+). Its pathway is purine metabolism; IMP biosynthesis via de novo pathway; N(1)-(5-phospho-D-ribosyl)glycinamide from 5-phospho-alpha-D-ribose 1-diphosphate: step 2/2. This Methanocella arvoryzae (strain DSM 22066 / NBRC 105507 / MRE50) protein is Phosphoribosylamine--glycine ligase.